The chain runs to 853 residues: DNA mismatch repair protein MutS (853 aa).

Residue 613–620 (GPNMGGKS) participates in ATP binding.

The protein belongs to the DNA mismatch repair MutS family.

Its function is as follows. This protein is involved in the repair of mismatches in DNA. It is possible that it carries out the mismatch recognition step. This protein has a weak ATPase activity. The polypeptide is DNA mismatch repair protein MutS (Vibrio atlanticus (strain LGP32) (Vibrio splendidus (strain Mel32))).